A 336-amino-acid polypeptide reads, in one-letter code: Meiotically up-regulated gene 33 protein (336 aa).

The disordered stretch occupies residues 232-336 (ISEDDGLKRG…KPSRFSWGRS (105 aa)). Residues 250–262 (TFSNDSRSLSSYA) are compositionally biased toward polar residues.

Its subcellular location is the cytoplasm. Has a role in meiosis. In Schizosaccharomyces pombe (strain 972 / ATCC 24843) (Fission yeast), this protein is Meiotically up-regulated gene 33 protein (mug33).